The primary structure comprises 246 residues: Probable transcriptional regulatory protein HSM_1763 (246 aa).

The protein belongs to the TACO1 family.

It is found in the cytoplasm. This Histophilus somni (strain 2336) (Haemophilus somnus) protein is Probable transcriptional regulatory protein HSM_1763.